The chain runs to 365 residues: Protein RecA (365 aa).

73–80 (GPESSGKT) contacts ATP.

The protein belongs to the RecA family.

The protein localises to the cytoplasm. In terms of biological role, can catalyze the hydrolysis of ATP in the presence of single-stranded DNA, the ATP-dependent uptake of single-stranded DNA by duplex DNA, and the ATP-dependent hybridization of homologous single-stranded DNAs. It interacts with LexA causing its activation and leading to its autocatalytic cleavage. This chain is Protein RecA, found in Prochlorococcus marinus (strain MIT 9301).